The sequence spans 643 residues: Pescadillo homolog (643 aa).

The BRCT domain occupies 319–412 (KLKTLFKGLK…RLLPTNKYFM (94 aa)). 3 disordered regions span residues 437–475 (AARK…PENE), 492–571 (TDSL…YREN), and 609–643 (DKNA…QILA). The span at 464 to 475 (SDDEEVQDPENE) shows a compositional bias: acidic residues. A compositionally biased stretch (basic and acidic residues) spans 492–518 (TDSLNSGKKEGADDATDNGKDAAEKKQ). The segment covering 524–544 (GESDDEDEEEEDDDDGEEEED) has biased composition (acidic residues). Residues 569–643 (RENEAEKKIV…QKQQRKQILA (75 aa)) adopt a coiled-coil conformation. Positions 609-635 (DKNARLLANKRERIEKQKRAEQMEKQK) are enriched in basic and acidic residues.

It belongs to the pescadillo family.

Its subcellular location is the nucleus. The protein localises to the nucleolus. The protein resides in the nucleoplasm. In terms of biological role, required for maturation of ribosomal RNAs and formation of the large ribosomal subunit. In Anopheles gambiae (African malaria mosquito), this protein is Pescadillo homolog.